The primary structure comprises 259 residues: Protein N-terminal and lysine N-methyltransferase efm7 (259 aa).

S-adenosyl-L-methionine contacts are provided by residues tryptophan 53, 80 to 82, aspartate 102, tryptophan 138, and alanine 164; that span reads GAA.

Belongs to the class I-like SAM-binding methyltransferase superfamily. EFM7 family.

The protein localises to the cytoplasm. In terms of biological role, S-adenosyl-L-methionine-dependent protein methyltransferase that trimethylates the N-terminal glycine 'Gly-2' of elongation factor 1-alpha, before also catalyzing the mono- and dimethylation of 'Lys-3'. In Emericella nidulans (strain FGSC A4 / ATCC 38163 / CBS 112.46 / NRRL 194 / M139) (Aspergillus nidulans), this protein is Protein N-terminal and lysine N-methyltransferase efm7.